Here is a 67-residue protein sequence, read N- to C-terminus: MASLKKFLFLVLFLGMVSLSICDKEKREGENEEEEEEHEEESEEKRGLFSFLPKVIGVIGPLIHPPS.

An N-terminal signal peptide occupies residues 1–22; it reads MASLKKFLFLVLFLGMVSLSIC. The propeptide occupies 23-46; it reads DKEKREGENEEEEEEHEEESEEKR. The tract at residues 24-48 is disordered; it reads KEKREGENEEEEEEHEEESEEKRGL. The span at 30–42 shows a compositional bias: acidic residues; sequence ENEEEEEEHEEES.

The protein belongs to the frog skin active peptide (FSAP) family. Dermaseptin subfamily. Expressed by the skin glands.

Its subcellular location is the secreted. This is Preprofallaxidin-4 from Litoria fallax (Eastern dwarf tree frog).